Consider the following 375-residue polypeptide: Aminomethyltransferase (375 aa).

It belongs to the GcvT family. In terms of assembly, the glycine cleavage system is composed of four proteins: P, T, L and H.

It carries out the reaction N(6)-[(R)-S(8)-aminomethyldihydrolipoyl]-L-lysyl-[protein] + (6S)-5,6,7,8-tetrahydrofolate = N(6)-[(R)-dihydrolipoyl]-L-lysyl-[protein] + (6R)-5,10-methylene-5,6,7,8-tetrahydrofolate + NH4(+). Its function is as follows. The glycine cleavage system catalyzes the degradation of glycine. This Ralstonia pickettii (strain 12J) protein is Aminomethyltransferase.